The chain runs to 341 residues: Inactive caspase-12 (341 aa).

The CARD domain maps to 1-92 (MADEKPSNGV…QLSSDISSDG (92 aa)). Residues Ser-85 and Ser-90 each carry the phosphoserine modification. Residues His-172 and Cys-220 contribute to the active site.

Belongs to the peptidase C14A family. As to expression, widely expressed, with highest levels in lung.

Functionally, may function as a negative regulator of inflammatory responses and innate immunity. May reduce cytokine release in response to bacterial lipopolysaccharide during infection. Reduces activation of NF-kappa-B in response to TNF. May lack protease activity. The sequence is that of Inactive caspase-12 (CASP12) from Homo sapiens (Human).